We begin with the raw amino-acid sequence, 267 residues long: CUE domain-containing protein 2 (267 aa).

The tract at residues 90–125 (ARNKETLRRPEKLKEESRPPAATGNTQDEAAAAEEE) is disordered. The span at 91 to 107 (RNKETLRRPEKLKEESR) shows a compositional bias: basic and acidic residues. One can recognise a CUE domain in the interval 124–167 (EEQPGVDVLLEVFPTCSMEQAQWVLAKARGNLEEAVQMLIEGKE).

This sequence belongs to the CUEDC2 family. Interacts with PGR and ESR1.

It localises to the cytoplasm. The protein resides in the nucleus. Controls PGR and ESR1 protein levels through their targeting for ubiquitination and subsequent proteasomal degradation. The protein is CUE domain-containing protein 2 (Cuedc2) of Rattus norvegicus (Rat).